The primary structure comprises 264 residues: Glutamate racemase (264 aa).

Substrate contacts are provided by residues 12 to 13 and 44 to 45; these read DS and YG. Cys-75 acts as the Proton donor/acceptor in catalysis. 76–77 is a binding site for substrate; sequence NT. The active-site Proton donor/acceptor is the Cys-186. 187-188 provides a ligand contact to substrate; that stretch reads TH.

This sequence belongs to the aspartate/glutamate racemases family.

The enzyme catalyses L-glutamate = D-glutamate. It functions in the pathway cell wall biogenesis; peptidoglycan biosynthesis. Provides the (R)-glutamate required for cell wall biosynthesis. This chain is Glutamate racemase, found in Stutzerimonas stutzeri (strain A1501) (Pseudomonas stutzeri).